The following is a 503-amino-acid chain: MLFSQIVATSRDVGATRSRKVKVGALREVLIQLEPAEVEPVVAWLSGELRQGRIGIGWRTLGDIPATPADVPAVTVSDLDGTVTAVAGISGSGSAARRRKLLADLFARTTADERDFLLRLLTGDLRQGALEGVMTDAIAAAADLPVEPVRRAFMLSGRLPATAVAAFDGGVDALTAFRLEVGRPVRPMLASPAESLTDAWTELGGDVSVEYKLDGARIQVHRNGDDVHVFTRTLREITGSVPELVELVAGLPCTSAVFDGETLALTDSGRPRPFQETMSRFGAESARDLLLHPYFFDCLHLDGVDLLDAPLEERLAALERVAPQHRIPGLIRPDSDGAATHFDDALAAGHEGVMVKSLAAPYAAGRRGRAWQKVKPEHTLDLVVLGAEWGYGRRTGYLSNLHLGARDPDGGEPIMVGKTFKGLTDALLQWQTDEFPRHERDRDDHTVYLHPDLVVEIELDGVQVSTRYPGGLALRFARVLRYRPDKTAAEADTIDAVRALLPG.

Glutamate 210 lines the ATP pocket. Lysine 212 (N6-AMP-lysine intermediate) is an active-site residue. The ATP site is built by arginine 217, arginine 232, glutamate 261, phenylalanine 296, arginine 367, and lysine 373.

This sequence belongs to the ATP-dependent DNA ligase family. It depends on Mg(2+) as a cofactor.

It carries out the reaction ATP + (deoxyribonucleotide)n-3'-hydroxyl + 5'-phospho-(deoxyribonucleotide)m = (deoxyribonucleotide)n+m + AMP + diphosphate.. DNA ligase that seals nicks in double-stranded DNA during DNA replication, DNA recombination and DNA repair. The polypeptide is Probable DNA ligase (Rhodococcus jostii (strain RHA1)).